The primary structure comprises 105 residues: Iron-sulfur cluster assembly protein CyaY (105 aa).

It belongs to the frataxin family.

Functionally, involved in iron-sulfur (Fe-S) cluster assembly. May act as a regulator of Fe-S biogenesis. This Paraburkholderia xenovorans (strain LB400) protein is Iron-sulfur cluster assembly protein CyaY.